The following is a 1211-amino-acid chain: Sterol 3-beta-glucosyltransferase (1211 aa).

The segment covering 1–10 has biased composition (basic and acidic residues); sequence MSQLRPRDSS. Residues 1-61 are disordered; the sequence is MSQLRPRDSS…DETEAEDDID (61 aa). The 40-residue stretch at 196–235 folds into the GRAM 1 domain; that stretch reads EKLKTTFDLSDDDEFVNDYPCWLLHEVFLQGHIYITSRYL. Residues 248 to 347 enclose the PH domain; it reads VTMSGALSIR…WVTDLRKHIF (100 aa). Disordered regions lie at residues 422-452 and 500-531; these read LTDSDSSESDSDVSGSETNGRSTHRKSKLSR and VVPNDNDSELKQDHAGDAPKDSEEPSTKPSNW. Positions 423–432 are enriched in acidic residues; it reads TDSDSSESDS. Residues 507 to 525 show a composition bias toward basic and acidic residues; it reads SELKQDHAGDAPKDSEEPS. The GRAM 2 domain maps to 586–652; sequence SRFRKHFSLP…SDIENVYNLK (67 aa). Ser770, Arg771, Asp773, Asn1046, Asn1072, Val1073, His1075, His1088, Ser1091, Gly1092, Thr1093, Asp1112, and Gln1113 together coordinate UDP-alpha-D-glucose.

Belongs to the glycosyltransferase 28 family.

The protein resides in the cytoplasm. The protein localises to the preautophagosomal structure membrane. The enzyme catalyses a sterol + UDP-alpha-D-glucose = a sterol 3-beta-D-glucoside + UDP + H(+). It catalyses the reaction ergosterol + UDP-alpha-D-glucose = ergosteryl 3-beta-D-glucoside + UDP + H(+). Sterol glycosyltransferase responsible for the glycosylation of ergosterol to form ergosterol-glucoside. Shows also activity in vitro on other sterols such as cholesterol, beta-sitosterol, stigmasterol and tomatidine. Probable sterol 3-beta-glucosyltransferase that mediates autophagic degradation of peroxisomes (pexophagy). This chain is Sterol 3-beta-glucosyltransferase, found in Komagataella phaffii (strain GS115 / ATCC 20864) (Yeast).